The sequence spans 376 residues: ATP phosphoribosyltransferase regulatory subunit (376 aa).

It belongs to the class-II aminoacyl-tRNA synthetase family. HisZ subfamily. As to quaternary structure, heteromultimer composed of HisG and HisZ subunits.

It is found in the cytoplasm. The protein operates within amino-acid biosynthesis; L-histidine biosynthesis; L-histidine from 5-phospho-alpha-D-ribose 1-diphosphate: step 1/9. Required for the first step of histidine biosynthesis. May allow the feedback regulation of ATP phosphoribosyltransferase activity by histidine. The polypeptide is ATP phosphoribosyltransferase regulatory subunit (Brucella canis (strain ATCC 23365 / NCTC 10854 / RM-666)).